Reading from the N-terminus, the 644-residue chain is MGTVSLAVQLFIVFLLTSYLLNKYSTIRKQNPIVTISTFIGWYFSLIIVFVLPLDVAITFFHKCENDRQRVLNTTSTPAPIVPECELPGGYVPDDVLFDLWRVVYWSAQILTWLILPLLQSYVTAGNFTIFGKIRAAVINNTVYYAIYSLCFLAILIYAMFKGVSINIENLKVILVSASNTWGLFLLVVLLGHGLVELPRSLWHHGNRHYRLRKTYFDIEKLASEKSEAEENVKEIYKKVRVLFNSMKNDQNGQRRKVRTILSKFSDDVIDQLFPSRQVIDNASMEEIGDYCSEAKLINLHKKTIYAVQTLNNATAQWKVLVDRALFLENLAFSESNGYNLDLARNICVPVGVRRFWYTRLQTPFCRVLGVVTVFMTFFVLFSECTFFVVSYTVSPAAFVTEYASNRFHYKYTQFVAFGIIVYLITCAYFTIFRLQIYKYYHLDPNGHTDENSILFSAILLCRLTPPICLNFLGMIHMDSHVSMAKSFGVETQFTKLMGHLDVIPILAKGINIYLPICIILLCAIHYYRVGAYVLHNIGFDQFVESDEMTNDMINSGRSLVQIERNSIKRSNERNQRNQSWTNTITSNTSTTSNAVNKYKRSRKNEEERPMLEEEEEMEEVSSTTRISLSPTEHPSSSGFFDDM.

At 1 to 4 the chain is on the extracellular side; that stretch reads MGTV. Residues 5–27 traverse the membrane as a helical segment; sequence SLAVQLFIVFLLTSYLLNKYSTI. At 28-31 the chain is on the cytoplasmic side; sequence RKQN. Residues 32 to 52 form a helical membrane-spanning segment; sequence PIVTISTFIGWYFSLIIVFVL. At 53 to 102 the chain is on the extracellular side; that stretch reads PLDVAITFFHKCENDRQRVLNTTSTPAPIVPECELPGGYVPDDVLFDLWR. Asn73 carries N-linked (GlcNAc...) asparagine glycosylation. A helical membrane pass occupies residues 103 to 123; the sequence is VVYWSAQILTWLILPLLQSYV. Residues 124 to 145 lie on the Cytoplasmic side of the membrane; it reads TAGNFTIFGKIRAAVINNTVYY. Residues 146–166 form a helical membrane-spanning segment; it reads AIYSLCFLAILIYAMFKGVSI. Topologically, residues 167–172 are extracellular; the sequence is NIENLK. The chain crosses the membrane as a helical span at residues 173 to 193; the sequence is VILVSASNTWGLFLLVVLLGH. Residues 194–369 are Cytoplasmic-facing; that stretch reads GLVELPRSLW…RLQTPFCRVL (176 aa). Positions 216–245 form a coiled coil; it reads YFDIEKLASEKSEAEENVKEIYKKVRVLFN. The chain crosses the membrane as a helical span at residues 370–390; the sequence is GVVTVFMTFFVLFSECTFFVV. Topologically, residues 391–412 are extracellular; sequence SYTVSPAAFVTEYASNRFHYKY. The helical transmembrane segment at 413–433 threads the bilayer; it reads TQFVAFGIIVYLITCAYFTIF. Topologically, residues 434-453 are cytoplasmic; it reads RLQIYKYYHLDPNGHTDENS. The chain crosses the membrane as a helical span at residues 454 to 474; it reads ILFSAILLCRLTPPICLNFLG. The Extracellular portion of the chain corresponds to 475-502; the sequence is MIHMDSHVSMAKSFGVETQFTKLMGHLD. A helical membrane pass occupies residues 503–523; it reads VIPILAKGINIYLPICIILLC. Residues 524–644 are Cytoplasmic-facing; it reads AIHYYRVGAY…PSSSGFFDDM (121 aa). Over residues 567–576 the composition is skewed to basic and acidic residues; sequence SIKRSNERNQ. The interval 567 to 644 is disordered; that stretch reads SIKRSNERNQ…PSSSGFFDDM (78 aa). Over residues 578–594 the composition is skewed to low complexity; sequence NQSWTNTITSNTSTTSN. Polar residues predominate over residues 621 to 644; that stretch reads VSSTTRISLSPTEHPSSSGFFDDM.

The protein belongs to the LIMR family.

The protein localises to the cell membrane. Functionally, may associate with G-protein coupled receptors and regulate downstream signaling pathways. In Caenorhabditis briggsae, this protein is G-protein coupled receptor-associated protein LMBRD2.